The following is a 547-amino-acid chain: Nitrosoguanidine resistance protein SNG1 (547 aa).

Positions 35–86 (NQRFAEGSGHSSDLAKSLEDYRPPDEKPSSLSSVGEGGANEEEKGGNDGGPL) are disordered. Residues 50 to 62 (KSLEDYRPPDEKP) are compositionally biased toward basic and acidic residues. Position 91 is a phosphothreonine (threonine 91). Transmembrane regions (helical) follow at residues 109–129 (FVLN…IYWG), 159–179 (ISAI…IYNA), 318–338 (ILMA…VLQL), 363–383 (LISW…SAIF), 394–414 (GGFV…GGAN), 418–438 (LSLV…TWII), 457–477 (YGYI…FLNL), and 488–508 (ILVA…KFAG). Residues 526–536 (ATQRASRPAEA) are compositionally biased toward low complexity. Residues 526 to 547 (ATQRASRPAEANTDKNNNPPGN) are disordered.

This sequence to yeast YJR015W.

The protein localises to the membrane. Its function is as follows. May function as a N-methyl-N'nitro-N-nitrosoguanidine (MNNG) export permease. This Saccharomyces cerevisiae (strain ATCC 204508 / S288c) (Baker's yeast) protein is Nitrosoguanidine resistance protein SNG1 (SNG1).